The primary structure comprises 325 residues: Natural cytotoxicity triggering receptor 1 (325 aa).

Positions 1–16 are cleaved as a signal peptide; it reads MLPTLTALLCLGLCLS. Topologically, residues 17–258 are extracellular; the sequence is QRINTEKQTL…WDHTAQNLIR (242 aa). 2 Ig-like domains span residues 42 to 100 and 137 to 192; these read GNSV…TCFY and GENV…RCFG. Cys49 and Cys98 are joined by a disulfide. Asn139 carries N-linked (GlcNAc...) asparagine glycosylation. A disulfide bridge connects residues Cys144 and Cys190. The N-linked (GlcNAc...) asparagine glycan is linked to Asn216. Residues 259-279 traverse the membrane as a helical segment; sequence IGLACIIVMALVWLLAEDWLS. At 280-325 the chain is on the cytoplasmic side; that stretch reads RRKDHEKLNRLTSWECRGRRRMHRYHEEEQRDAISMRELKATPGDM.

The protein belongs to the natural cytotoxicity receptor (NCR) family. As to quaternary structure, interacts with CD3Z and FCER1G. As to expression, weakly expressed in spleen, heart and lung.

It localises to the cell membrane. Its function is as follows. Cytotoxicity-activating receptor that may contribute to the increased efficiency of activated natural killer (NK) cells to mediate tumor cell lysis. This is Natural cytotoxicity triggering receptor 1 (Ncr1) from Rattus norvegicus (Rat).